The following is a 251-amino-acid chain: HTH-type transcriptional regulator UlaR (251 aa).

The HTH deoR-type domain maps to 3 to 58 (EAQRHQILLEMLAQLGFVTVEKVVERLGISPATARRDINKLGESGKLKKVRNGAEA). A DNA-binding region (H-T-H motif) is located at residues 20–39 (VTVEKVVERLGISPATARRD).

It is found in the cytoplasm. Functionally, represses ulaG and the ulaABCDEF operon. The chain is HTH-type transcriptional regulator UlaR from Shigella flexneri.